The chain runs to 201 residues: Ribosomal RNA large subunit methyltransferase E (201 aa).

Residues G40, W42, D62, D78, and D101 each coordinate S-adenosyl-L-methionine. The active-site Proton acceptor is the K141.

The protein belongs to the class I-like SAM-binding methyltransferase superfamily. RNA methyltransferase RlmE family.

The protein localises to the cytoplasm. It carries out the reaction uridine(2552) in 23S rRNA + S-adenosyl-L-methionine = 2'-O-methyluridine(2552) in 23S rRNA + S-adenosyl-L-homocysteine + H(+). In terms of biological role, specifically methylates the uridine in position 2552 of 23S rRNA at the 2'-O position of the ribose in the fully assembled 50S ribosomal subunit. This chain is Ribosomal RNA large subunit methyltransferase E, found in Anaplasma marginale (strain Florida).